The chain runs to 557 residues: UvrABC system protein C (557 aa).

A GIY-YIG domain is found at 14-89 (EEPGVYIFKN…IKKYRPKYNV (76 aa)). Residues 194-229 (EEVFDYLKEKMETHSRMLDFENAAKYRDLLLNLSNV) enclose the UVR domain.

This sequence belongs to the UvrC family. In terms of assembly, interacts with UvrB in an incision complex.

It is found in the cytoplasm. In terms of biological role, the UvrABC repair system catalyzes the recognition and processing of DNA lesions. UvrC both incises the 5' and 3' sides of the lesion. The N-terminal half is responsible for the 3' incision and the C-terminal half is responsible for the 5' incision. The polypeptide is UvrABC system protein C (Thermotoga petrophila (strain ATCC BAA-488 / DSM 13995 / JCM 10881 / RKU-1)).